Consider the following 22-residue polypeptide: MRNISLTTTIITTTDTTGNGAG.

Positions 1–22 are disordered; it reads MRNISLTTTIITTTDTTGNGAG. The span at 7–22 shows a compositional bias: low complexity; it reads TTTIITTTDTTGNGAG.

It belongs to the thr operon leader peptide family.

In terms of biological role, this protein is involved in control of the biosynthesis of threonine. The sequence is that of thr operon leader peptide from Serratia marcescens.